Here is a 72-residue protein sequence, read N- to C-terminus: Small proline-rich protein 2A (72 aa).

The segment covering 1-11 has biased composition (low complexity); sequence MSYQQQQCKQP. A disordered region spans residues 1-20; that stretch reads MSYQQQQCKQPCQPPPVCPT. Repeat copies occupy residues 21 to 29, 30 to 38, and 39 to 47. Positions 21 to 47 are 3 X 9 AA tandem repeats of P-K-C-P-[EQ]-P-C-P-P; that stretch reads PKCPEPCPPPKCPEPCPPPKCPQPCPP. A disordered region spans residues 42 to 72; it reads PQPCPPQQCQQKYPPVTPSPPCQSKYPPKSK.

This sequence belongs to the cornifin (SPRR) family. Forms five pairs of intrachain disulfide bonds. Expressed in intestine; selectively expressed in goblet cells.

The protein resides in the secreted. It is found in the extracellular space. Its subcellular location is the cytoplasmic vesicle. It localises to the secretory vesicle. In terms of biological role, gut bactericidal protein that selectively kills Gram-positive bacteria by binding to negatively charged lipids on bacterial membranes, leading to bacterial membrane permeabilization and disruption. Specifically binds lipids bearing negatively charged headgroups, such as phosphatidic acid, phosphatidylserine (PS), cardiolipin (CL), and phosphatidylinositol phosphates, but not to zwitterionic or neutral lipids. Induced by type-2 cytokines in response to helminth infection and is required to protect against helminth-induced bacterial invasion of intestinal tissue. May also be involved in the development of the cornified envelope of squamous epithelia; however, additional evidences are required to confirm this result in vivo. This Homo sapiens (Human) protein is Small proline-rich protein 2A.